The following is a 402-amino-acid chain: UPF0261 protein BPP1817 (402 aa).

Belongs to the UPF0261 family.

The protein is UPF0261 protein BPP1817 of Bordetella parapertussis (strain 12822 / ATCC BAA-587 / NCTC 13253).